Here is a 443-residue protein sequence, read N- to C-terminus: Lysine-specific demethylase 8 (443 aa).

Residues 139–165 (TKLEAERGVREPGLESSKLHSPGEHSN) show a composition bias toward basic and acidic residues. The segment at 139 to 174 (TKLEAERGVREPGLESSKLHSPGEHSNKKSFASVTG) is disordered. Residues 298–443 (GYLAQHQLFE…LSFSVSFWWS (146 aa)) form the JmjC domain. Residues His-348, Asp-350, and His-427 each contribute to the Fe cation site.

It depends on Fe(2+) as a cofactor.

It localises to the nucleus. The enzyme catalyses N(6),N(6)-dimethyl-L-lysyl(36)-[histone H3] + 2 2-oxoglutarate + 2 O2 = L-lysyl(36)-[histone H3] + 2 formaldehyde + 2 succinate + 2 CO2. In terms of biological role, histone demethylase required for G2/M phase cell cycle progression. Specifically demethylates dimethylated 'Lys-36' (H3K36me2) of histone H3, an epigenetic repressive mark, thereby acting as a transcription activator. May play a role in the regulation of the circadian clock. The polypeptide is Lysine-specific demethylase 8 (kdm8) (Xenopus tropicalis (Western clawed frog)).